The primary structure comprises 366 residues: 5-hydroxytryptamine receptor 1F (366 aa).

Over 1 to 24 the chain is Extracellular; it reads MDFLNASDQNLTSEELLNRMPSKI. 2 N-linked (GlcNAc...) asparagine glycosylation sites follow: N5 and N10. Residues 25-49 form a helical membrane-spanning segment; that stretch reads LVSLTLSGLALMTTTINSLVIAAII. Over 50–59 the chain is Cytoplasmic; sequence VTRKLHHPAN. Residues 60 to 81 traverse the membrane as a helical segment; it reads YLICSLAVTDFLVAVLVMPFSI. The Extracellular portion of the chain corresponds to 82 to 96; sequence VYIVRESWIMGQVLC. Cysteines 96 and 172 form a disulfide. A helical membrane pass occupies residues 97-119; the sequence is DIWLSVDIICCTCSILHLSAIAL. Serotonin contacts are provided by D103 and C107. The DRY motif; important for ligand-induced conformation changes motif lies at 120–122; sequence DRY. At 120-139 the chain is on the cytoplasmic side; the sequence is DRYRAITDAVEYARKRTPRH. A helical membrane pass occupies residues 140–159; the sequence is AGIMITIVWVISVFISMPPL. Residues 160–178 lie on the Extracellular side of the membrane; the sequence is FWRHQGTSRDDECVIKHDH. Residues 179–202 form a helical membrane-spanning segment; sequence IVSTIYSTFGAFYIPLVLILILYY. Residues 203-291 are Cytoplasmic-facing; it reads KIYRAARTLY…KISGTRERKA (89 aa). A helical membrane pass occupies residues 292-315; the sequence is ATTLGLILGAFVICWLPFFVKELV. At 316 to 327 the chain is on the extracellular side; the sequence is VNVCEKCKISEE. The helical transmembrane segment at 328–350 threads the bilayer; sequence MSNFLAWLGYLNSLINPLIYTIF. Positions 343-347 match the NPxxY motif; important for ligand-induced conformation changes and signaling motif; it reads NPLIY. Over 351 to 366 the chain is Cytoplasmic; sequence NEDFKKAFQKLVRCRY.

It belongs to the G-protein coupled receptor 1 family. As to expression, detected in hippocampus.

It is found in the cell membrane. In terms of biological role, G-protein coupled receptor for 5-hydroxytryptamine (serotonin). Also functions as a receptor for various alkaloids and psychoactive substances. Ligand binding causes a conformation change that triggers signaling via guanine nucleotide-binding proteins (G proteins) and modulates the activity of downstream effectors, such as adenylate cyclase. HTR1F is coupled to G(i)/G(o) G alpha proteins and mediates inhibitory neurotransmission by inhibiting adenylate cyclase activity. The sequence is that of 5-hydroxytryptamine receptor 1F (Htr1f) from Mus musculus (Mouse).